The sequence spans 150 residues: Arginine repressor (150 aa).

Belongs to the ArgR family.

The protein resides in the cytoplasm. It participates in amino-acid biosynthesis; L-arginine biosynthesis [regulation]. In terms of biological role, regulates arginine biosynthesis genes. The polypeptide is Arginine repressor (Clostridium botulinum (strain Alaska E43 / Type E3)).